We begin with the raw amino-acid sequence, 514 residues long: Voltage-gated potassium channel regulatory subunit KCNG1 (514 aa).

Topologically, residues Met1–Leu224 are cytoplasmic. Over residues Glu181–Ser196 the composition is skewed to acidic residues. The disordered stretch occupies residues Glu181–Arg205. Residues Pro225–Val246 form a helical membrane-spanning segment. The Extracellular segment spans residues Ser247–Asn267. A helical transmembrane segment spans residues Val268–Gln289. Over Ala290–Pro300 the chain is Cytoplasmic. The chain crosses the membrane as a helical span at residues Leu301–Ala321. Residues Ala322 to Val338 are Extracellular-facing. Residues Gly339–His359 traverse the membrane as a helical; Voltage-sensor segment. The Cytoplasmic portion of the chain corresponds to Ser360–Thr374. Residues Arg375–Tyr396 form a helical membrane-spanning segment. The Extracellular portion of the chain corresponds to Val397 to Ile411. Positions Pro412–Thr423 form an intramembrane region, helical. The Selectivity filter signature appears at Thr424–Asp429. Residues Thr424–Val431 lie within the membrane without spanning it. Topologically, residues Pro432 to Gln438 are extracellular. Residues Val439–Tyr467 traverse the membrane as a helical segment. Over Leu468–Asn514 the chain is Cytoplasmic.

The protein belongs to the potassium channel family. G (TC 1.A.1.2) subfamily. Kv6.1/KCNG1 sub-subfamily. In terms of assembly, heterotetramer with KCNB1 or KCNB2.

It localises to the cell membrane. Its function is as follows. Regulatory alpha-subunit of the voltage-gated potassium (Kv) channel which, when coassembled with KCNB1 or KCNB2, can modulate their expression and their gating kinetics by acting on deactivation upon repolarization and inactivation during maintained depolarization. Potassium channel subunit that does not form functional channels by itself. In Rattus norvegicus (Rat), this protein is Voltage-gated potassium channel regulatory subunit KCNG1.